Consider the following 362-residue polypeptide: 3-dehydroquinate synthase (362 aa).

Residues 74 to 79 (DGEGYK), 108 to 112 (GVIGD), 132 to 133 (TT), Lys-145, Lys-154, and 172 to 175 (TLDT) contribute to the NAD(+) site. Zn(2+) is bound by residues Glu-187, His-250, and His-267.

The protein belongs to the sugar phosphate cyclases superfamily. Dehydroquinate synthase family. Co(2+) is required as a cofactor. The cofactor is Zn(2+). It depends on NAD(+) as a cofactor.

Its subcellular location is the cytoplasm. It carries out the reaction 7-phospho-2-dehydro-3-deoxy-D-arabino-heptonate = 3-dehydroquinate + phosphate. The protein operates within metabolic intermediate biosynthesis; chorismate biosynthesis; chorismate from D-erythrose 4-phosphate and phosphoenolpyruvate: step 2/7. Its function is as follows. Catalyzes the conversion of 3-deoxy-D-arabino-heptulosonate 7-phosphate (DAHP) to dehydroquinate (DHQ). The polypeptide is 3-dehydroquinate synthase (Citrifermentans bemidjiense (strain ATCC BAA-1014 / DSM 16622 / JCM 12645 / Bem) (Geobacter bemidjiensis)).